A 43-amino-acid polypeptide reads, in one-letter code: Photosystem II reaction center protein K (43 aa).

Positions 1-6 (MSLLLA) are excised as a propeptide. The chain crosses the membrane as a helical span at residues 18-38 (IVDVLPIIPVLFLLLAFVWQA).

This sequence belongs to the PsbK family. PSII is composed of 1 copy each of membrane proteins PsbA, PsbB, PsbC, PsbD, PsbE, PsbF, PsbH, PsbI, PsbJ, PsbK, PsbL, PsbM, PsbT, PsbX, PsbY, PsbZ, Psb30/Ycf12, at least 3 peripheral proteins of the oxygen-evolving complex and a large number of cofactors. It forms dimeric complexes.

The protein localises to the plastid. It is found in the chloroplast thylakoid membrane. One of the components of the core complex of photosystem II (PSII). PSII is a light-driven water:plastoquinone oxidoreductase that uses light energy to abstract electrons from H(2)O, generating O(2) and a proton gradient subsequently used for ATP formation. It consists of a core antenna complex that captures photons, and an electron transfer chain that converts photonic excitation into a charge separation. The protein is Photosystem II reaction center protein K of Oltmannsiellopsis viridis (Marine flagellate).